Reading from the N-terminus, the 115-residue chain is Putative membrane protein insertion efficiency factor (115 aa).

The interval 81 to 115 is disordered; the sequence is DPRPGRCGCKDAGPAVSAGSTEGNPGRRTDGTDPD. Residues 105–115 show a composition bias toward basic and acidic residues; the sequence is PGRRTDGTDPD.

The protein belongs to the UPF0161 family.

The protein resides in the cell inner membrane. Its function is as follows. Could be involved in insertion of integral membrane proteins into the membrane. This chain is Putative membrane protein insertion efficiency factor, found in Rhodospirillum rubrum (strain ATCC 11170 / ATH 1.1.1 / DSM 467 / LMG 4362 / NCIMB 8255 / S1).